The primary structure comprises 134 residues: UPF0756 membrane protein YeaL (134 aa).

The next 4 membrane-spanning stretches (helical) occupy residues 14-34, 51-71, 86-106, and 110-130; these read ALGF…LIIV, LTVG…SGTL, LVAI…ITLM, and PQLV…FRGV.

It belongs to the UPF0756 family.

Its subcellular location is the cell membrane. The polypeptide is UPF0756 membrane protein YeaL (Salmonella typhimurium (strain LT2 / SGSC1412 / ATCC 700720)).